The sequence spans 104 residues: Pyrimidine/purine nucleoside phosphorylase (104 aa).

Belongs to the nucleoside phosphorylase PpnP family.

It carries out the reaction a purine D-ribonucleoside + phosphate = a purine nucleobase + alpha-D-ribose 1-phosphate. The enzyme catalyses adenosine + phosphate = alpha-D-ribose 1-phosphate + adenine. It catalyses the reaction cytidine + phosphate = cytosine + alpha-D-ribose 1-phosphate. The catalysed reaction is guanosine + phosphate = alpha-D-ribose 1-phosphate + guanine. It carries out the reaction inosine + phosphate = alpha-D-ribose 1-phosphate + hypoxanthine. The enzyme catalyses thymidine + phosphate = 2-deoxy-alpha-D-ribose 1-phosphate + thymine. It catalyses the reaction uridine + phosphate = alpha-D-ribose 1-phosphate + uracil. The catalysed reaction is xanthosine + phosphate = alpha-D-ribose 1-phosphate + xanthine. Its function is as follows. Catalyzes the phosphorolysis of diverse nucleosides, yielding D-ribose 1-phosphate and the respective free bases. Can use uridine, adenosine, guanosine, cytidine, thymidine, inosine and xanthosine as substrates. Also catalyzes the reverse reactions. This Syntrophotalea carbinolica (strain DSM 2380 / NBRC 103641 / GraBd1) (Pelobacter carbinolicus) protein is Pyrimidine/purine nucleoside phosphorylase.